Reading from the N-terminus, the 279-residue chain is MQKYLEKANVLIEALPYIRKFNSKIILIKYGGSAMENEELKHCVMQDIALLKLVGLKPIIVHGGGKDISAMCEKLGVKSEFKNGLRVSDKATTEVASMVLNHINKNLVHSLQNLGVKAIGLCGKDGALLECVKKDENLAFVGTIQKVNSKILEELLEKDFLPIITPIGMDENFNTYNINADDAACSIAKALRAEKLAFLTDTAGLYEDFNDKNSLISKISLEQAKILAPKIEGGMHVKLKSCIDACENGVKKVHILDGRVKHSLLLEFFTDEGIGTLVG.

Residues 64 to 65 (GG), R86, and N177 contribute to the substrate site.

It belongs to the acetylglutamate kinase family. ArgB subfamily.

Its subcellular location is the cytoplasm. It carries out the reaction N-acetyl-L-glutamate + ATP = N-acetyl-L-glutamyl 5-phosphate + ADP. Its pathway is amino-acid biosynthesis; L-arginine biosynthesis; N(2)-acetyl-L-ornithine from L-glutamate: step 2/4. Catalyzes the ATP-dependent phosphorylation of N-acetyl-L-glutamate. This is Acetylglutamate kinase from Campylobacter jejuni subsp. jejuni serotype O:6 (strain 81116 / NCTC 11828).